Here is an 861-residue protein sequence, read N- to C-terminus: MPILLFLIDTSASMNQRTDLGTSYLDIAKGAVELFLKLRARDPASRGDRYMLVTYDEPPYCIKAGWKENHATFMSELKNLQASGLTTLGQALRSSFDLLNLNRLISGIDNYGQGRNPFFLEPSILITITDGNKLTSTAGVQEELHLPLNSPLPGSELTKEPFRWDQRLFALVLRLPGVASTEPEQLGSVPTDESAITQMCEVTGGRSYCVRTQRMLNQCLESLVQKVQSGVVINFEKTGPDPLPIGEDGLMDSSRPSNSFAAQPWHSCHKLIYVRPNSKTGVPVGHWPIPESFWPDQNLPSLPPRTSHPVVRFSCVDCEPMVIDKLPFDKYELEPSPLTQYILERKSPHTCWQVFVTSSGKYNELGYPFGYLKASTTLTCVNLFVMPYNYPVLLPLLDDLFKVHKLKPNLKWRQAFDSYLKTLPPYYLLTKLESERILASVGKKPPQEIGIKVKNHSGGGMSLTHNKNFRKLLKEITGETALRLTELNTKEFAGFQIGLLNKDLKPQTYRNAYDIPRRGLLDQLTRMRSNLLKTHKFIVGQDEDSLHSVPVAQMGNYQEYLKTLASPLREIDPDQPKRLHTFGNPFKQDKKGMMIDEADEFVAGPQNKVKRPGEPNSPMSSKRRRSMSLLLRKPQTPPTVTNHVGGKGPPSASWFPSYPNLIKPTLVHTDATIIHDGHEEKMENGQITPDGFLSKSAPSELINMTGDLMPPNQVDSLSDDFTSLSKDGLIQKPGSNAFVGGAKNCSLSVDDQKDPVASTLGAMPNTLQITPAMAQGINADIKHQLMKEVRKFGRKYERIFILLEEVQGPLEMKKQFVEFTIKEAARFKRRVLIQYLEKVLEKINSHHLHNNISHINSRSSC.

The region spanning 3 to 227 (ILLFLIDTSA…QCLESLVQKV (225 aa)) is the VWFA domain. Positions 605–626 (PQNKVKRPGEPNSPMSSKRRRS) are disordered. Position 617 is a phosphoserine (Ser617).

This is Integrator complex subunit 6-like (INTS6L) from Homo sapiens (Human).